A 416-amino-acid chain; its full sequence is MNFRLHGAFSNPSFVKIFFTKASPERRLTCFHVTKHGYSFQTDLHDYRKIMKFVISRNELGNLIKKVQNVVPQSTPIPVLTHVLIESCNDELVFTATDLTVSTRCVVKAKVYESGSVTIPSRRFFQLIRELTEANIEVAAHSGEMATITSGSSCFRLLSMGKEDFPMLPDMQNALRFTLDSERLKDMFQRTSFAVSREESRYVLTGVLLSIANGTMTVVGTDGKRLAKIDTEISLDPSFSGDYIIPIKAVEEIIRMSSEDVQSTIFLDQTKIAVECGNTLLVTKLLSGEFPDFSPVISTHSSVQLDLHREELISLLKQVALFTNESSHSVKFSFSPGELTLTANCTKVGEGKVSMAVNYTGETLEIAFNPFFFLDILKHSRDELVQLGISDSYNPGIITDSTRSLFVIMPMRLHDD.

It belongs to the beta sliding clamp family. In terms of assembly, forms a ring-shaped head-to-tail homodimer around DNA which binds and tethers DNA polymerases and other proteins to the DNA. The DNA replisome complex has a single clamp-loading complex (3 tau and 1 each of delta, delta', psi and chi subunits) which binds 3 Pol III cores (1 core on the leading strand and 2 on the lagging strand) each with a beta sliding clamp dimer. Additional proteins in the replisome are other copies of gamma, psi and chi, Ssb, DNA helicase and RNA primase.

It is found in the cytoplasm. Confers DNA tethering and processivity to DNA polymerases and other proteins. Acts as a clamp, forming a ring around DNA (a reaction catalyzed by the clamp-loading complex) which diffuses in an ATP-independent manner freely and bidirectionally along dsDNA. Initially characterized for its ability to contact the catalytic subunit of DNA polymerase III (Pol III), a complex, multichain enzyme responsible for most of the replicative synthesis in bacteria; Pol III exhibits 3'-5' exonuclease proofreading activity. The beta chain is required for initiation of replication as well as for processivity of DNA replication. The chain is Beta sliding clamp (dnaN) from Chlamydia trachomatis serovar D (strain ATCC VR-885 / DSM 19411 / UW-3/Cx).